The primary structure comprises 123 residues: Cysteine proteinase inhibitor 8 (123 aa).

The N-terminal stretch at 1-19 (MARIPLLLALLLAVSAAAA) is a signal peptide. Positions 33–91 (GGWSPITDVGDPHIQELGGWAVERHASLSSDGLRFRRVTSGEQQVVSGMNYRLVVSASD) constitute a Cystatin domain. The Secondary area of contact signature appears at 76–80 (QVVSG).

This sequence belongs to the cystatin family. Phytocystatin subfamily.

It is found in the secreted. Functionally, specific inhibitor of cysteine proteinases. Probably involved in the regulation of endogenous processes and in defense against pests and pathogens. The chain is Cysteine proteinase inhibitor 8 from Oryza sativa subsp. japonica (Rice).